We begin with the raw amino-acid sequence, 230 residues long: Triggering receptor expressed on myeloid cells 1 (230 aa).

The first 20 residues, 1–20 (MRKAGLWGLLCVFFVSEVKA), serve as a signal peptide directing secretion. The region spanning 21-124 (AIVLEEERYD…IYHPPNDPVV (104 aa)) is the Ig-like V-type domain. The Extracellular portion of the chain corresponds to 21–202 (AIVLEEERYD…TDADSVSTSS (182 aa)). Residues Cys41 and Cys113 are joined by a disulfide bond. An N-linked (GlcNAc...) asparagine glycan is attached at Asn191. Residues 203–223 (VTISVICGLLSKSLVFIILFI) traverse the membrane as a helical segment. Residues 224 to 230 (VTKRTFG) lie on the Cytoplasmic side of the membrane.

In terms of assembly, monomer. Homomultimer; when activated. Interacts with TYROBP/DAP12. Interacts with TLR4.

It is found in the cell membrane. Its function is as follows. Cell surface receptor that plays important roles in innate and adaptive immunity by amplifying inflammatory responses. Upon activation by various ligands such as PGLYRP1, HMGB1 or HSP70, multimerizes and forms a complex with transmembrane adapter TYROBP/DAP12. In turn, initiates a SYK-mediated cascade of tyrosine phosphorylation, activating multiple downstream mediators such as BTK, MAPK1, MAPK3 or phospholipase C-gamma. This cascade promotes the neutrophil- and macrophage-mediated release of pro-inflammatory cytokines and/or chemokines, as well as their migration and thereby amplifies inflammatory responses that are triggered by bacterial and fungal infections. By also promoting the amplification of inflammatory signals that are initially triggered by Toll-like receptor (TLR) and NOD-like receptor engagement, plays a major role in the pathophysiology of acute and chronic inflammatory diseases of different etiologies including septic shock and atherosclerosis. The polypeptide is Triggering receptor expressed on myeloid cells 1 (Trem1) (Mus musculus (Mouse)).